The primary structure comprises 128 residues: Small ribosomal subunit protein uS14m (128 aa).

This sequence belongs to the universal ribosomal protein uS14 family. As to quaternary structure, component of the mitochondrial ribosome small subunit (28S) which comprises a 12S rRNA and about 30 distinct proteins. Interacts with LIAT1.

It localises to the mitochondrion. The chain is Small ribosomal subunit protein uS14m (MRPS14) from Bos taurus (Bovine).